We begin with the raw amino-acid sequence, 254 residues long: Transcription factor bHLH51 (254 aa).

In terms of domain architecture, bHLH spans 62–111 (SLSRSHRLAEKRRRDRINSHLTALRKLVPNSDKLDKAALLATVIEQVKEL).

Homodimer. As to expression, expressed constitutively in roots, stems, and flowers.

It is found in the nucleus. This is Transcription factor bHLH51 (BHLH51) from Arabidopsis thaliana (Mouse-ear cress).